We begin with the raw amino-acid sequence, 150 residues long: Ankyrin repeat protein C18/B24 (150 aa).

One copy of the ANK repeat lies at Glu-41 to Ser-73.

The chain is Ankyrin repeat protein C18/B24 from Vaccinia virus (strain Copenhagen) (VACV).